Reading from the N-terminus, the 379-residue chain is Transcription termination factor 1b, mitochondrial (379 aa).

Residues 1 to 37 (MASRNIWCVRRNFLFDLRGWMLQYSAEVFLKSISFRT) constitute a mitochondrion transit peptide. 5 interaction with DNA regions span residues 151 to 152 (RS), 229 to 233 (QSTKR), 306 to 313 (SEKKFNDK), 337 to 340 (SINT), and 366 to 373 (SQRRYEAK).

It belongs to the mTERF family. Monomer. Phosphoprotein with mostly four phosphate groups. While the DNA-binding activity is unaffected by the phosphorylation state, only the phosphorylated form of the protein is active for termination activity. Functioning seems to be regulated by phosphorylation. As to expression, expressed strongly in the heart and at lower levels in brain, liver and kidney.

The protein resides in the mitochondrion. In terms of biological role, transcription termination factor. Binds to a 28 bp region within the tRNA(Leu(uur)) gene at a position immediately adjacent to and downstream of the 16S rRNA gene; this region comprises a tridecamer sequence critical for directing accurate termination. Binds DNA along the major grove and promotes DNA bending and partial unwinding. Promotes base flipping. Transcription termination activity appears to be polarized with highest specificity for transcripts initiated on the light strand. The protein is Transcription termination factor 1b, mitochondrial of Mus musculus (Mouse).